Consider the following 138-residue polypeptide: Ribosome-binding factor A (138 aa).

Residues 112-138 (EARTQGQEPAADVEPAPGAAPDDEAEE) form a disordered region. Residues 119-131 (EPAADVEPAPGAA) show a composition bias toward low complexity.

Belongs to the RbfA family. As to quaternary structure, monomer. Binds 30S ribosomal subunits, but not 50S ribosomal subunits or 70S ribosomes.

Its subcellular location is the cytoplasm. One of several proteins that assist in the late maturation steps of the functional core of the 30S ribosomal subunit. Associates with free 30S ribosomal subunits (but not with 30S subunits that are part of 70S ribosomes or polysomes). Required for efficient processing of 16S rRNA. May interact with the 5'-terminal helix region of 16S rRNA. The protein is Ribosome-binding factor A of Anaeromyxobacter dehalogenans (strain 2CP-C).